A 163-amino-acid chain; its full sequence is Transcription elongation factor GreB (163 aa).

Belongs to the GreA/GreB family. GreB subfamily.

Its function is as follows. Necessary for efficient RNA polymerase transcription elongation past template-encoded arresting sites. The arresting sites in DNA have the property of trapping a certain fraction of elongating RNA polymerases that pass through, resulting in locked ternary complexes. Cleavage of the nascent transcript by cleavage factors such as GreA or GreB allows the resumption of elongation from the new 3'terminus. GreB releases sequences of up to 9 nucleotides in length. The polypeptide is Transcription elongation factor GreB (Vibrio parahaemolyticus serotype O3:K6 (strain RIMD 2210633)).